The sequence spans 190 residues: Putative glutathione-dependent formaldehyde-activating enzyme (190 aa).

The region spanning 19–165 is the CENP-V/GFA domain; the sequence is FKGGKLYCHC…FRKEGLQTYD (147 aa). Residues Cys26, Cys28, Cys47, Cys49, Cys52, Cys94, and Cys97 each contribute to the Zn(2+) site.

Belongs to the Gfa family. Zn(2+) serves as cofactor.

The catalysed reaction is S-(hydroxymethyl)glutathione = glutathione + formaldehyde. Its pathway is one-carbon metabolism; formaldehyde degradation; formate from formaldehyde (glutathione route): step 1/3. In terms of biological role, catalyzes the condensation of formaldehyde and glutathione to S-hydroxymethylglutathione. The protein is Putative glutathione-dependent formaldehyde-activating enzyme of Phaeosphaeria nodorum (strain SN15 / ATCC MYA-4574 / FGSC 10173) (Glume blotch fungus).